We begin with the raw amino-acid sequence, 131 residues long: Transcriptional activatory protein CaiF (131 aa).

Its function is as follows. Potential transcriptional activator of carnitine metabolism. The polypeptide is Transcriptional activatory protein CaiF (caiF) (Escherichia coli (strain K12)).